A 93-amino-acid polypeptide reads, in one-letter code: U12-lycotoxin-Ls1d (93 aa).

An N-terminal signal peptide occupies residues 1–18 (MKFAVILLFSLVVLAVAS). Positions 19-38 (ESVEEVRREIDIEDLPEQQR) are excised as a propeptide.

It belongs to the neurotoxin 31 family. Contains 5 disulfide bonds. In terms of tissue distribution, expressed by the venom gland.

Its subcellular location is the secreted. This chain is U12-lycotoxin-Ls1d, found in Lycosa singoriensis (Wolf spider).